A 122-amino-acid polypeptide reads, in one-letter code: VQECVSEFISFITSEASERCHQEKRKTINGEDILFAMSTLGFDSYVEPLKLYLQKFREAMKGEKGIGGTVTTGDGLGEDLAEEPFTSQIPAGLITTDGQQQNVMVYTTSYQQISGVQQIQFS.

Positions 1–12 (VQECVSEFISFI) are subunit association domain (SAD). Residues 1–57 (VQECVSEFISFITSEASERCHQEKRKTINGEDILFAMSTLGFDSYVEPLKLYLQKFR) are b domain. The segment at 58-122 (EAMKGEKGIG…ISGVQQIQFS (65 aa)) is c domain.

The protein belongs to the NFYB/HAP3 subunit family. As to quaternary structure, heterotrimeric transcription factor composed of three components, NF-YA, NF-YB and NF-YC. NF-YB and NF-YC must interact and dimerize for NF-YA association and DNA binding.

Its subcellular location is the nucleus. Component of the sequence-specific heterotrimeric transcription factor (NF-Y) which specifically recognizes a 5'-CCAAT-3' box motif found in the promoters of its target genes. NF-Y can function as both an activator and a repressor, depending on its interacting cofactors. The sequence is that of Nuclear transcription factor Y subunit beta (nfyb) from Xenopus laevis (African clawed frog).